We begin with the raw amino-acid sequence, 158 residues long: Transcription elongation factor GreA (158 aa).

The stretch at 4–75 (EKTYPMTQEG…TQLENMIRNA (72 aa)) forms a coiled coil.

It belongs to the GreA/GreB family.

Functionally, necessary for efficient RNA polymerase transcription elongation past template-encoded arresting sites. The arresting sites in DNA have the property of trapping a certain fraction of elongating RNA polymerases that pass through, resulting in locked ternary complexes. Cleavage of the nascent transcript by cleavage factors such as GreA or GreB allows the resumption of elongation from the new 3'terminus. GreA releases sequences of 2 to 3 nucleotides. This is Transcription elongation factor GreA from Bacillus anthracis (strain A0248).